A 1876-amino-acid chain; its full sequence is Phenolphthiocerol/phthiocerol polyketide synthase subunit A (1876 aa).

Thr2 is modified (N-acetylthreonine). The 75-residue stretch at 9–83 (ADLRHWLIDY…ALAAYLAAPE (75 aa)) folds into the Carrier 1 domain. Ser43 carries the post-translational modification O-(pantetheine 4'-phosphoryl)serine. The Ketosynthase family 3 (KS3) domain maps to 101–526 (DEPIAVVGMG…GTNAHVVIEQ (426 aa)). Catalysis depends on for beta-ketoacyl synthase activity residues Cys273, His408, and His448. The interval 626-950 (SPGPGTVFVY…NLNKAHTIHP (325 aa)) is acyltransferase. Ser720 functions as the For malonyltransferase activity in the catalytic mechanism. Residues 997 to 1112 (HTTVATVSAS…AQLSSSPSDS (116 aa)) form an N-terminal hotdog fold region. The PKS/mFAS DH domain maps to 997-1267 (HTTVATVSAS…YRALDFGLDV (271 aa)). The active-site Proton acceptor; for dehydratase activity is His1027. Residues 1102 to 1130 (TAQLSSSPSDSASSLNEHHRANGQPPERA) form a disordered region. Residues 1106 to 1115 (SSSPSDSASS) show a composition bias toward low complexity. The interval 1130-1267 (AHRDLIPDLA…YRALDFGLDV (138 aa)) is C-terminal hotdog fold. Residue Asp1186 is the Proton donor; for dehydratase activity of the active site. 1491–1551 (AAYLITGGLG…RRRIDAIRAL (61 aa)) contributes to the NADP(+) binding site. Residues 1491 to 1728 (AAYLITGGLG…DGYDVAQAVV (238 aa)) form a beta-ketoacyl reductase region. A Carrier 2 domain is found at 1759-1836 (EVRSELEQGL…SLASYLAKRV (78 aa)). The residue at position 1796 (Ser1796) is an O-(pantetheine 4'-phosphoryl)serine.

It depends on NADP(+) as a cofactor. Pantetheine 4'-phosphate serves as cofactor.

It catalyses the reaction icosanoyl-[(phenol)carboxyphthiodiolenone synthase] + 2 (S)-methylmalonyl-CoA + 3 malonyl-CoA + 5 NADPH + 10 H(+) = C32-carboxyphthiodiolenone-[(phenol)carboxyphthiodiolenone synthase] + 5 CO2 + 5 NADP(+) + 5 CoA + 2 H2O. The enzyme catalyses docosanoyl-[(phenol)carboxyphthiodiolenone synthase] + 2 (S)-methylmalonyl-CoA + 3 malonyl-CoA + 5 NADPH + 10 H(+) = C34-carboxyphthiodiolenone-[(phenol)carboxyphthiodiolenone synthase] + 5 CO2 + 5 NADP(+) + 5 CoA + 2 H2O. It carries out the reaction 17-(4-hydroxyphenyl)heptadecanoyl-[(phenol)carboxyphthiodiolenone synthase] + 2 (S)-methylmalonyl-CoA + 3 malonyl-CoA + 5 NADPH + 10 H(+) = C35-(phenol)carboxyphthiodiolenone-[(phenol)carboxyphthiodiolenone synthase] + 5 CO2 + 5 NADP(+) + 5 CoA + 2 H2O. The catalysed reaction is 19-(4-hydroxyphenyl)nonadecanoyl-[(phenol)carboxyphthiodiolenone synthase] + 2 (S)-methylmalonyl-CoA + 3 malonyl-CoA + 5 NADPH + 10 H(+) = C37-(phenol)carboxyphthiodiolenone-[(phenol)carboxyphthiodiolenone synthase] + 5 CO2 + 5 NADP(+) + 5 CoA + 2 H2O. The protein operates within lipid metabolism; fatty acid biosynthesis. Its function is as follows. Part of the PpsABCDE complex involved in the biosynthesis of the lipid core common to phthiocerols and phenolphthiocerols by successive additions of malonyl-CoA or methylmalonyl-CoA extender units. PpsA can accept as substrate the activated forms of either icosanoyl (C20), docosanoyl (C22) or lignoceroyl (C24) groups from FadD26, or a (4-hydroxyphenyl)-C17 or (4-hydroxyphenyl)-C19 fatty acyl from FadD29. PpsA initiates the biosynthesis and extends its substrate using a malonyl-CoA extender unit. The PpsB and PpsC proteins add the second and third malonyl-CoA extender units. PpsD adds an (R)-methylmalonyl unit and PpsE adds a second (R)-methylmalonyl unit. The incorporation of the methylmalonyl units results in formation of two branched methyl groups in the elongated product. This is Phenolphthiocerol/phthiocerol polyketide synthase subunit A (ppsA) from Mycobacterium tuberculosis (strain ATCC 25618 / H37Rv).